The following is a 194-amino-acid chain: 3-isopropylmalate dehydratase small subunit (194 aa).

This sequence belongs to the LeuD family. LeuD type 1 subfamily. As to quaternary structure, heterodimer of LeuC and LeuD.

It catalyses the reaction (2R,3S)-3-isopropylmalate = (2S)-2-isopropylmalate. The protein operates within amino-acid biosynthesis; L-leucine biosynthesis; L-leucine from 3-methyl-2-oxobutanoate: step 2/4. In terms of biological role, catalyzes the isomerization between 2-isopropylmalate and 3-isopropylmalate, via the formation of 2-isopropylmaleate. The chain is 3-isopropylmalate dehydratase small subunit from Bacillus cereus (strain ATCC 14579 / DSM 31 / CCUG 7414 / JCM 2152 / NBRC 15305 / NCIMB 9373 / NCTC 2599 / NRRL B-3711).